The sequence spans 310 residues: Isoflavone reductase homolog A622 (310 aa).

Residues 13 to 19 (GGTGYIG), Arg-38, and Lys-47 contribute to the NADP(+) site. Lys-135 serves as the catalytic Proton acceptor. Position 139 (Arg-139) interacts with NADP(+).

The protein belongs to the NmrA-type oxidoreductase family. Isoflavone reductase subfamily. Monomer.

The protein localises to the cytoplasm. It participates in alkaloid biosynthesis; nicotine biosynthesis. In terms of biological role, NADPH-binding protein. Involved in the biosynthesis of pyridine alkaloid natural products, leading mainly to the production of anabasine, anatabine, nicotine and nornicotine, effective deterrents against herbivores with antiparasitic and pesticide properties (neurotoxins); nornicotine serves as the precursor in the synthesis of the carcinogen compound N'-nitrosonornicotine (NNN). Reductase involved in a late step of tobacco alkaloid biosynthesis. Triggers either the formation of a nicotinic acid-derived precursor or the final condensation reaction of tobacco alkaloids. The polypeptide is Isoflavone reductase homolog A622 (Nicotiana glauca (Glaucous tobacco)).